Consider the following 391-residue polypeptide: F-box/kelch-repeat protein At4g05080 (391 aa).

The F-box domain occupies 2–49 (TMMFDLTQDLVKEILSRVPITSLGAVRSTCKGWNALSKDRILCKAKPK). 2 Kelch repeats span residues 100-143 (HMYY…TFCL) and 144-194 (RYDN…SASV). Over residues 369–385 (RRRRERNSKRKEKKRKG) the composition is skewed to basic residues. The segment at 369–391 (RRRRERNSKRKEKKRKGTTNNKV) is disordered.

This is F-box/kelch-repeat protein At4g05080 from Arabidopsis thaliana (Mouse-ear cress).